The following is a 130-amino-acid chain: DNA-directed RNA polymerase subunit omega (130 aa).

Disordered regions lie at residues 79–98 (EPESDTVPLIGSAGASVDAD) and 108–130 (TEEELLKGLEGLAPPEEQPEEDE).

This sequence belongs to the RNA polymerase subunit omega family. As to quaternary structure, the RNAP catalytic core consists of 2 alpha, 1 beta, 1 beta' and 1 omega subunit. When a sigma factor is associated with the core the holoenzyme is formed, which can initiate transcription.

The catalysed reaction is RNA(n) + a ribonucleoside 5'-triphosphate = RNA(n+1) + diphosphate. In terms of biological role, promotes RNA polymerase assembly. Latches the N- and C-terminal regions of the beta' subunit thereby facilitating its interaction with the beta and alpha subunits. The protein is DNA-directed RNA polymerase subunit omega of Nitrobacter winogradskyi (strain ATCC 25391 / DSM 10237 / CIP 104748 / NCIMB 11846 / Nb-255).